The chain runs to 486 residues: ATP synthase subunit beta (486 aa).

An ATP-binding site is contributed by 170–177; it reads GGAGVGKT.

The protein belongs to the ATPase alpha/beta chains family. As to quaternary structure, F-type ATPases have 2 components, CF(1) - the catalytic core - and CF(0) - the membrane proton channel. CF(1) has five subunits: alpha(3), beta(3), gamma(1), delta(1), epsilon(1). CF(0) has three main subunits: a(1), b(2) and c(9-12). The alpha and beta chains form an alternating ring which encloses part of the gamma chain. CF(1) is attached to CF(0) by a central stalk formed by the gamma and epsilon chains, while a peripheral stalk is formed by the delta and b chains.

The protein resides in the cell membrane. The catalysed reaction is ATP + H2O + 4 H(+)(in) = ADP + phosphate + 5 H(+)(out). In terms of biological role, produces ATP from ADP in the presence of a proton gradient across the membrane. The catalytic sites are hosted primarily by the beta subunits. This Clavibacter michiganensis subsp. michiganensis (strain NCPPB 382) protein is ATP synthase subunit beta.